A 486-amino-acid polypeptide reads, in one-letter code: Aspartyl/glutamyl-tRNA(Asn/Gln) amidotransferase subunit B (486 aa).

It belongs to the GatB/GatE family. GatB subfamily. In terms of assembly, heterotrimer of A, B and C subunits.

The enzyme catalyses L-glutamyl-tRNA(Gln) + L-glutamine + ATP + H2O = L-glutaminyl-tRNA(Gln) + L-glutamate + ADP + phosphate + H(+). It carries out the reaction L-aspartyl-tRNA(Asn) + L-glutamine + ATP + H2O = L-asparaginyl-tRNA(Asn) + L-glutamate + ADP + phosphate + 2 H(+). In terms of biological role, allows the formation of correctly charged Asn-tRNA(Asn) or Gln-tRNA(Gln) through the transamidation of misacylated Asp-tRNA(Asn) or Glu-tRNA(Gln) in organisms which lack either or both of asparaginyl-tRNA or glutaminyl-tRNA synthetases. The reaction takes place in the presence of glutamine and ATP through an activated phospho-Asp-tRNA(Asn) or phospho-Glu-tRNA(Gln). The chain is Aspartyl/glutamyl-tRNA(Asn/Gln) amidotransferase subunit B from Leptospira interrogans serogroup Icterohaemorrhagiae serovar Lai (strain 56601).